Reading from the N-terminus, the 592-residue chain is Potassium-transporting ATPase potassium-binding subunit (592 aa).

The next 13 helical transmembrane spans lie at 6-26, 67-87, 136-156, 179-199, 283-303, 312-332, 359-379, 389-409, 411-431, 450-470, 489-511, 519-539, and 559-579; these read WLETILFFVVLLALIKPFGTY, ACAMLLFNLVFAVSLFAMLLL, GFAVHNFTSAATGIVIAIAAI, LYILLPLSLIAAIFLVSQGVI, LSNIFEVFLILLISGGLTYTF, QGWALLAVMLAILILAIGVFY, FGLAGSALFATATTGTSCGAV, IGGMVPLSLILLSEVIFGGVG, GLYTMLAFVVIAVFVAGLMIG, ITTVLASGILVLIFSGIAMIL, LYAFASMSNNNGSAFAGLNGNTL, VAMLLGRFVPAVAVLAMAGGL, and FALWLTLVILIVGALTFFPAL.

This sequence belongs to the KdpA family. The system is composed of three essential subunits: KdpA, KdpB and KdpC.

It is found in the cell inner membrane. Functionally, part of the high-affinity ATP-driven potassium transport (or Kdp) system, which catalyzes the hydrolysis of ATP coupled with the electrogenic transport of potassium into the cytoplasm. This subunit binds the periplasmic potassium ions and delivers the ions to the membrane domain of KdpB through an intramembrane tunnel. The chain is Potassium-transporting ATPase potassium-binding subunit from Geotalea uraniireducens (strain Rf4) (Geobacter uraniireducens).